Reading from the N-terminus, the 480-residue chain is Siroheme synthase (480 aa).

The tract at residues 1–203 (MNYFPIFANL…QQTAQAEQEL (203 aa)) is precorrin-2 dehydrogenase /sirohydrochlorin ferrochelatase. NAD(+) is bound by residues 22–23 (SV) and 43–44 (NQ). Ser-128 carries the phosphoserine modification. The interval 214-480 (GFVSLVGAGP…GGLNAGQRAA (267 aa)) is uroporphyrinogen-III C-methyltransferase. Pro-223 is a binding site for S-adenosyl-L-methionine. The active-site Proton acceptor is the Asp-246. Lys-268 functions as the Proton donor in the catalytic mechanism. S-adenosyl-L-methionine contacts are provided by residues 299-301 (GGD), Val-304, 329-330 (TA), Met-381, and Gly-410.

In the N-terminal section; belongs to the precorrin-2 dehydrogenase / sirohydrochlorin ferrochelatase family. This sequence in the C-terminal section; belongs to the precorrin methyltransferase family.

The enzyme catalyses uroporphyrinogen III + 2 S-adenosyl-L-methionine = precorrin-2 + 2 S-adenosyl-L-homocysteine + H(+). It catalyses the reaction precorrin-2 + NAD(+) = sirohydrochlorin + NADH + 2 H(+). The catalysed reaction is siroheme + 2 H(+) = sirohydrochlorin + Fe(2+). The protein operates within cofactor biosynthesis; adenosylcobalamin biosynthesis; precorrin-2 from uroporphyrinogen III: step 1/1. Its pathway is cofactor biosynthesis; adenosylcobalamin biosynthesis; sirohydrochlorin from precorrin-2: step 1/1. It participates in porphyrin-containing compound metabolism; siroheme biosynthesis; precorrin-2 from uroporphyrinogen III: step 1/1. It functions in the pathway porphyrin-containing compound metabolism; siroheme biosynthesis; siroheme from sirohydrochlorin: step 1/1. The protein operates within porphyrin-containing compound metabolism; siroheme biosynthesis; sirohydrochlorin from precorrin-2: step 1/1. Its function is as follows. Multifunctional enzyme that catalyzes the SAM-dependent methylations of uroporphyrinogen III at position C-2 and C-7 to form precorrin-2 via precorrin-1. Then it catalyzes the NAD-dependent ring dehydrogenation of precorrin-2 to yield sirohydrochlorin. Finally, it catalyzes the ferrochelation of sirohydrochlorin to yield siroheme. This is Siroheme synthase from Neisseria meningitidis serogroup C (strain 053442).